Here is an 89-residue protein sequence, read N- to C-terminus: Small ribosomal subunit protein uS15 (89 aa).

It belongs to the universal ribosomal protein uS15 family. As to quaternary structure, part of the 30S ribosomal subunit. Forms a bridge to the 50S subunit in the 70S ribosome, contacting the 23S rRNA.

Functionally, one of the primary rRNA binding proteins, it binds directly to 16S rRNA where it helps nucleate assembly of the platform of the 30S subunit by binding and bridging several RNA helices of the 16S rRNA. Its function is as follows. Forms an intersubunit bridge (bridge B4) with the 23S rRNA of the 50S subunit in the ribosome. In Gloeothece citriformis (strain PCC 7424) (Cyanothece sp. (strain PCC 7424)), this protein is Small ribosomal subunit protein uS15.